Consider the following 443-residue polypeptide: Protein FAM83A (443 aa).

A disordered region spans residues 311 to 403 (DSGVSVMTDS…YYQRNYAPDS (93 aa)). Positions 315 to 326 (SVMTDSTPESVN) are enriched in polar residues. Low complexity-rich tracts occupy residues 327 to 344 (TTSE…SNDS) and 388 to 399 (SNYQPNYYQRNY).

The protein belongs to the FAM83 family.

It is found in the cytoplasm. Functionally, may function in the epidermal growth factor receptor/EGFR signaling pathway. The protein is Protein FAM83A of Xenopus laevis (African clawed frog).